Consider the following 400-residue polypeptide: tRNA pseudouridine synthase Pus10 (400 aa).

A THUMP domain is found at 77-194 (QVYVELFGSP…DGSVSVQPRR (118 aa)). Position 301 (tyrosine 301) interacts with substrate.

Belongs to the pseudouridine synthase Pus10 family.

The catalysed reaction is uridine(54) in tRNA = pseudouridine(54) in tRNA. It carries out the reaction uridine(55) in tRNA = pseudouridine(55) in tRNA. In terms of biological role, responsible for synthesis of pseudouridine from uracil-54 and uracil-55 in the psi GC loop of transfer RNAs. The polypeptide is tRNA pseudouridine synthase Pus10 (Acidilobus saccharovorans (strain DSM 16705 / JCM 18335 / VKM B-2471 / 345-15)).